A 306-amino-acid polypeptide reads, in one-letter code: Ornithine carbamoyltransferase (306 aa).

Residues 53-56 (STRT), Gln80, Arg104, and 131-134 (HPCQ) contribute to the carbamoyl phosphate site. L-ornithine is bound by residues Asn162, Asp219, and 223 to 224 (SM). Residues 259–260 (CL) and Arg287 contribute to the carbamoyl phosphate site.

This sequence belongs to the aspartate/ornithine carbamoyltransferase superfamily. OTCase family.

The protein localises to the cytoplasm. It catalyses the reaction carbamoyl phosphate + L-ornithine = L-citrulline + phosphate + H(+). The protein operates within amino-acid biosynthesis; L-arginine biosynthesis; L-arginine from L-ornithine and carbamoyl phosphate: step 1/3. Functionally, reversibly catalyzes the transfer of the carbamoyl group from carbamoyl phosphate (CP) to the N(epsilon) atom of ornithine (ORN) to produce L-citrulline. The chain is Ornithine carbamoyltransferase from Psychrobacter sp. (strain PRwf-1).